An 87-amino-acid polypeptide reads, in one-letter code: Translation initiation factor IF-1 2 (87 aa).

The S1-like domain maps to 1 to 72 (MAKEELIELN…TKGRINFRHK (72 aa)). Residues 66–87 (RINFRHKDERSGPPSRPPQHRR) form a disordered region.

The protein belongs to the IF-1 family. In terms of assembly, component of the 30S ribosomal translation pre-initiation complex which assembles on the 30S ribosome in the order IF-2 and IF-3, IF-1 and N-formylmethionyl-tRNA(fMet); mRNA recruitment can occur at any time during PIC assembly.

The protein localises to the cytoplasm. Its function is as follows. One of the essential components for the initiation of protein synthesis. Stabilizes the binding of IF-2 and IF-3 on the 30S subunit to which N-formylmethionyl-tRNA(fMet) subsequently binds. Helps modulate mRNA selection, yielding the 30S pre-initiation complex (PIC). Upon addition of the 50S ribosomal subunit IF-1, IF-2 and IF-3 are released leaving the mature 70S translation initiation complex. The chain is Translation initiation factor IF-1 2 from Bordetella parapertussis (strain 12822 / ATCC BAA-587 / NCTC 13253).